The chain runs to 163 residues: Urease accessory protein UreE (163 aa).

A disordered region spans residues 144 to 163; sequence QPEPGAYGGSSAGSHDGHHH.

The protein belongs to the UreE family.

The protein localises to the cytoplasm. In terms of biological role, involved in urease metallocenter assembly. Binds nickel. Probably functions as a nickel donor during metallocenter assembly. The polypeptide is Urease accessory protein UreE (Aliivibrio fischeri (strain MJ11) (Vibrio fischeri)).